We begin with the raw amino-acid sequence, 123 residues long: Small ribosomal subunit protein uS13 (123 aa).

A disordered region spans residues 97-123; it reads PVRGQRTHTNAKTRKGRSRLPVAAKKK.

It belongs to the universal ribosomal protein uS13 family. In terms of assembly, part of the 30S ribosomal subunit. Forms a loose heterodimer with protein S19. Forms two bridges to the 50S subunit in the 70S ribosome.

In terms of biological role, located at the top of the head of the 30S subunit, it contacts several helices of the 16S rRNA. In the 70S ribosome it contacts the 23S rRNA (bridge B1a) and protein L5 of the 50S subunit (bridge B1b), connecting the 2 subunits; these bridges are implicated in subunit movement. Contacts the tRNAs in the A and P-sites. The protein is Small ribosomal subunit protein uS13 of Ehrlichia ruminantium (strain Gardel).